The following is a 107-amino-acid chain: 2Fe-2S ferredoxin CtmE (107 aa).

The 2Fe-2S ferredoxin-type domain occupies 3–106 (VKVTYVDSAN…GLVIHTLEPE (104 aa)). Residues Cys41, Cys47, Cys50, and Cys87 each coordinate [2Fe-2S] cluster.

It belongs to the adrenodoxin/putidaredoxin family. [2Fe-2S] cluster is required as a cofactor.

It functions in the pathway terpene metabolism; monoterpene degradation. In terms of biological role, involved in the degradation of the cyclic monoterpene limonene. Probably part of an electron transfer system involved in the oxidation of limonene to perillyl alcohol. The protein is 2Fe-2S ferredoxin CtmE of Castellaniella defragrans (strain DSM 12143 / CCUG 39792 / 65Phen) (Alcaligenes defragrans).